The primary structure comprises 216 residues: DNA replication complex GINS protein psf1 (216 aa).

The tract at residues 110 to 133 (QTTGGPKGVTEGNEGGGTTSSLSP) is disordered. Residues 111–127 (TTGGPKGVTEGNEGGGT) show a composition bias toward gly residues.

The protein belongs to the GINS1/PSF1 family. In terms of assembly, component of the GINS complex which is a heterotetramer of div-26/sld5, drc-1/psf1, drc-2/psf2 and drc-3/psf3.

The protein resides in the nucleus. The GINS complex plays an essential role in the initiation of DNA replication. This chain is DNA replication complex GINS protein psf1 (drc-1), found in Neurospora crassa (strain ATCC 24698 / 74-OR23-1A / CBS 708.71 / DSM 1257 / FGSC 987).